The following is a 271-amino-acid chain: 5-deoxy-glucuronate isomerase (271 aa).

This sequence belongs to the isomerase IolB family.

It catalyses the reaction 5-deoxy-D-glucuronate = 5-dehydro-2-deoxy-D-gluconate. Its pathway is polyol metabolism; myo-inositol degradation into acetyl-CoA; acetyl-CoA from myo-inositol: step 4/7. In terms of biological role, involved in the isomerization of 5-deoxy-glucuronate (5DG) to 5-dehydro-2-deoxy-D-gluconate (DKG or 2-deoxy-5-keto-D-gluconate). The chain is 5-deoxy-glucuronate isomerase from Bacillus subtilis subsp. natto.